A 155-amino-acid polypeptide reads, in one-letter code: SsrA-binding protein (155 aa).

A compositionally biased stretch (basic and acidic residues) spans 132 to 147 (KRESIKRREQDRDIKR). The tract at residues 132-155 (KRESIKRREQDRDIKRQMKQFNGR) is disordered.

This sequence belongs to the SmpB family.

Its subcellular location is the cytoplasm. Functionally, required for rescue of stalled ribosomes mediated by trans-translation. Binds to transfer-messenger RNA (tmRNA), required for stable association of tmRNA with ribosomes. tmRNA and SmpB together mimic tRNA shape, replacing the anticodon stem-loop with SmpB. tmRNA is encoded by the ssrA gene; the 2 termini fold to resemble tRNA(Ala) and it encodes a 'tag peptide', a short internal open reading frame. During trans-translation Ala-aminoacylated tmRNA acts like a tRNA, entering the A-site of stalled ribosomes, displacing the stalled mRNA. The ribosome then switches to translate the ORF on the tmRNA; the nascent peptide is terminated with the 'tag peptide' encoded by the tmRNA and targeted for degradation. The ribosome is freed to recommence translation, which seems to be the essential function of trans-translation. In Streptococcus mutans serotype c (strain ATCC 700610 / UA159), this protein is SsrA-binding protein.